A 276-amino-acid chain; its full sequence is Large ribosomal subunit protein uL2 (276 aa).

A disordered region spans residues 210–276; it reads GRNRHRGIRP…KLIISRRKGK (67 aa). Positions 230–240 are enriched in basic and acidic residues; that stretch reads DHPHGGGEGKK. Over residues 255-276 the composition is skewed to basic residues; that stretch reads KGAKTRRKKASDKLIISRRKGK.

The protein belongs to the universal ribosomal protein uL2 family. In terms of assembly, part of the 50S ribosomal subunit. Forms a bridge to the 30S subunit in the 70S ribosome.

One of the primary rRNA binding proteins. Required for association of the 30S and 50S subunits to form the 70S ribosome, for tRNA binding and peptide bond formation. It has been suggested to have peptidyltransferase activity; this is somewhat controversial. Makes several contacts with the 16S rRNA in the 70S ribosome. The polypeptide is Large ribosomal subunit protein uL2 (Campylobacter jejuni subsp. jejuni serotype O:6 (strain 81116 / NCTC 11828)).